Consider the following 234-residue polypeptide: Glucosamine-6-phosphate deaminase (234 aa).

Asp-63 (proton acceptor; for enolization step) is an active-site residue. Asn-129 acts as the For ring-opening step in catalysis. The active-site Proton acceptor; for ring-opening step is the His-131. Catalysis depends on Glu-136, which acts as the For ring-opening step.

The protein belongs to the glucosamine/galactosamine-6-phosphate isomerase family. NagB subfamily.

It catalyses the reaction alpha-D-glucosamine 6-phosphate + H2O = beta-D-fructose 6-phosphate + NH4(+). Its pathway is amino-sugar metabolism; N-acetylneuraminate degradation; D-fructose 6-phosphate from N-acetylneuraminate: step 5/5. Its function is as follows. Catalyzes the reversible isomerization-deamination of glucosamine 6-phosphate (GlcN6P) to form fructose 6-phosphate (Fru6P) and ammonium ion. The sequence is that of Glucosamine-6-phosphate deaminase from Listeria monocytogenes serovar 1/2a (strain ATCC BAA-679 / EGD-e).